Reading from the N-terminus, the 323-residue chain is MTEVLMFDALREATDEEMQNDSSVFILGEDVGHYGGSYKVTKDLHSKYGDLRVLDTPIAENSFMGMAIGAAITGLRPIVEGMNMSFLLLAFNQISNNAGMLRYTSGGNFQIPIVIRGPGGVGRQLGAEHSQRLEAYFQAIPGLKIVACSTPYNAKGLLKSAIRDNNPVIFFEHVLLYNLKDELPNDEYFLPLDKAELVRDGLDVTILTYSRMRHHVMQAVVDLVNDGYNPEVIDLISLKPLDITSIAQSLMKTHKLIIVEECMKTGGIGAEIIAQINDNYFDFLDAPIVRLSSQDIPTPYNGKLEKATVIYPQQIIEAVKSIV.

Residue Glu60 participates in thiamine diphosphate binding. K(+) is bound by residues Ile113, Ala161, Ile162, Asp164, and Asn166.

Heterodimer of an alpha and a beta chain. Thiamine diphosphate serves as cofactor.

The protein localises to the plastid. Its subcellular location is the chloroplast. The catalysed reaction is N(6)-[(R)-lipoyl]-L-lysyl-[protein] + pyruvate + H(+) = N(6)-[(R)-S(8)-acetyldihydrolipoyl]-L-lysyl-[protein] + CO2. In terms of biological role, the pyruvate dehydrogenase complex catalyzes the overall conversion of pyruvate to acetyl-CoA and CO(2). It contains multiple copies of three enzymatic components: pyruvate dehydrogenase (E1), dihydrolipoamide acetyltransferase (E2) and lipoamide dehydrogenase (E3). This chain is Pyruvate dehydrogenase E1 component subunit beta (pdhB), found in Gracilaria tenuistipitata var. liui (Red alga).